The sequence spans 230 residues: ATP phosphoribosyltransferase (230 aa).

The protein belongs to the ATP phosphoribosyltransferase family. Short subfamily. In terms of assembly, heteromultimer composed of HisG and HisZ subunits.

It is found in the cytoplasm. The enzyme catalyses 1-(5-phospho-beta-D-ribosyl)-ATP + diphosphate = 5-phospho-alpha-D-ribose 1-diphosphate + ATP. It participates in amino-acid biosynthesis; L-histidine biosynthesis; L-histidine from 5-phospho-alpha-D-ribose 1-diphosphate: step 1/9. Catalyzes the condensation of ATP and 5-phosphoribose 1-diphosphate to form N'-(5'-phosphoribosyl)-ATP (PR-ATP). Has a crucial role in the pathway because the rate of histidine biosynthesis seems to be controlled primarily by regulation of HisG enzymatic activity. The sequence is that of ATP phosphoribosyltransferase (hisG) from Chelativorans sp. (strain BNC1).